Consider the following 485-residue polypeptide: Glutamyl-tRNA(Gln) amidotransferase subunit A (485 aa).

Catalysis depends on charge relay system residues lysine 79 and serine 154. Serine 178 functions as the Acyl-ester intermediate in the catalytic mechanism.

This sequence belongs to the amidase family. GatA subfamily. In terms of assembly, heterotrimer of A, B and C subunits.

The catalysed reaction is L-glutamyl-tRNA(Gln) + L-glutamine + ATP + H2O = L-glutaminyl-tRNA(Gln) + L-glutamate + ADP + phosphate + H(+). Allows the formation of correctly charged Gln-tRNA(Gln) through the transamidation of misacylated Glu-tRNA(Gln) in organisms which lack glutaminyl-tRNA synthetase. The reaction takes place in the presence of glutamine and ATP through an activated gamma-phospho-Glu-tRNA(Gln). This Clostridium botulinum (strain Eklund 17B / Type B) protein is Glutamyl-tRNA(Gln) amidotransferase subunit A.